A 226-amino-acid chain; its full sequence is NADH-quinone oxidoreductase subunit B 2 (226 aa).

Residues cysteine 37, cysteine 38, cysteine 103, and cysteine 132 each coordinate [4Fe-4S] cluster.

The protein belongs to the complex I 20 kDa subunit family. In terms of assembly, NDH-1 is composed of 14 different subunits. Subunits NuoB, C, D, E, F, and G constitute the peripheral sector of the complex. [4Fe-4S] cluster is required as a cofactor.

It is found in the cell membrane. It carries out the reaction a quinone + NADH + 5 H(+)(in) = a quinol + NAD(+) + 4 H(+)(out). Its function is as follows. NDH-1 shuttles electrons from NADH, via FMN and iron-sulfur (Fe-S) centers, to quinones in the respiratory chain. The immediate electron acceptor for the enzyme in this species is believed to be a menaquinone. Couples the redox reaction to proton translocation (for every two electrons transferred, four hydrogen ions are translocated across the cytoplasmic membrane), and thus conserves the redox energy in a proton gradient. The protein is NADH-quinone oxidoreductase subunit B 2 of Salinispora arenicola (strain CNS-205).